Here is a 173-residue protein sequence, read N- to C-terminus: Mesencephalic astrocyte-derived neurotrophic factor homolog (173 aa).

The N-terminal stretch at 1–22 (MKTWHMVVVIGFLATLAQTSLA) is a signal peptide. Disulfide bonds link Cys28-Cys114, Cys31-Cys103, Cys61-Cys72, and Cys148-Cys151.

It belongs to the ARMET family.

Its subcellular location is the secreted. Its function is as follows. Required during the maturation of the embryonic nervous system for maintenance of neuronal and cuticular connectivity. Essential for maintenance of dopaminergic neurons and dopamine levels. This is Mesencephalic astrocyte-derived neurotrophic factor homolog from Drosophila simulans (Fruit fly).